Here is a 150-residue protein sequence, read N- to C-terminus: Troponin C, isoform 2B (150 aa).

The residue at position 1 (methionine 1) is an N-acetylmethionine. 4 consecutive EF-hand domains span residues 7–42 (EQLSALQKAFDSFDTDSKGFITPETVGVILRMMGVK), 43–78 (ISEKNLQEVISETDEDGSGELEFEEFVELAAKFLIE), 83–118 (ALKAELREAFRVYDRGGNGYITTDVLKEILRELDNR), and 119–150 (LTEEDLDSIIEEVDEDGSGTLDFNEFMQMMNG). Residues aspartate 56, aspartate 58, serine 60, glutamate 62, and glutamate 67 each contribute to the Ca(2+) site. 5 residues coordinate Ca(2+): aspartate 132, aspartate 134, serine 136, threonine 138, and glutamate 143.

The protein belongs to the troponin C family.

In terms of biological role, troponin is the central regulatory protein of striated muscle contraction. Tn consists of three components: Tn-I which is the inhibitor of actomyosin ATPase, Tn-T which contains the binding site for tropomyosin and Tn-C. The binding of calcium to Tn-C abolishes the inhibitory action of Tn on actin filaments. The protein is Troponin C, isoform 2B of Homarus americanus (American lobster).